A 22-amino-acid chain; its full sequence is Proline-rich peptide (22 aa).

The disordered stretch occupies residues 1-22 (FVDRNRIPRSNNGPKIPIISNP).

Its subcellular location is the secreted. Antibacterial peptide active against Gram-positive bacterium M.luteus and Gram-negative bacterium E.coli. In Calliphora vicina (Blue blowfly), this protein is Proline-rich peptide.